A 207-amino-acid chain; its full sequence is Adenylyl-sulfate kinase (207 aa).

Position 34 to 41 (34 to 41 (GLSGSGKS)) interacts with ATP. Ser-108 serves as the catalytic Phosphoserine intermediate.

Belongs to the APS kinase family.

The catalysed reaction is adenosine 5'-phosphosulfate + ATP = 3'-phosphoadenylyl sulfate + ADP + H(+). It functions in the pathway sulfur metabolism; hydrogen sulfide biosynthesis; sulfite from sulfate: step 2/3. In terms of biological role, catalyzes the synthesis of activated sulfate. The chain is Adenylyl-sulfate kinase from Lactiplantibacillus plantarum (strain ATCC BAA-793 / NCIMB 8826 / WCFS1) (Lactobacillus plantarum).